Here is a 177-residue protein sequence, read N- to C-terminus: Large ribosomal subunit protein uL6 (177 aa).

It belongs to the universal ribosomal protein uL6 family. Part of the 50S ribosomal subunit.

In terms of biological role, this protein binds to the 23S rRNA, and is important in its secondary structure. It is located near the subunit interface in the base of the L7/L12 stalk, and near the tRNA binding site of the peptidyltransferase center. The protein is Large ribosomal subunit protein uL6 of Rickettsia akari (strain Hartford).